Reading from the N-terminus, the 282-residue chain is Formamidopyrimidine-DNA glycosylase (282 aa).

Residue proline 2 is the Schiff-base intermediate with DNA of the active site. Glutamate 3 (proton donor) is an active-site residue. The active-site Proton donor; for beta-elimination activity is the lysine 60. DNA contacts are provided by histidine 99, arginine 118, and lysine 163. An FPG-type zinc finger spans residues 248–282 (LVYRRSGKNCKKCGEKILREKICGRSTHWCPNCQK). Residue arginine 272 is the Proton donor; for delta-elimination activity of the active site.

The protein belongs to the FPG family. Monomer. Zn(2+) serves as cofactor.

The catalysed reaction is Hydrolysis of DNA containing ring-opened 7-methylguanine residues, releasing 2,6-diamino-4-hydroxy-5-(N-methyl)formamidopyrimidine.. The enzyme catalyses 2'-deoxyribonucleotide-(2'-deoxyribose 5'-phosphate)-2'-deoxyribonucleotide-DNA = a 3'-end 2'-deoxyribonucleotide-(2,3-dehydro-2,3-deoxyribose 5'-phosphate)-DNA + a 5'-end 5'-phospho-2'-deoxyribonucleoside-DNA + H(+). Its function is as follows. Involved in base excision repair of DNA damaged by oxidation or by mutagenic agents. Acts as a DNA glycosylase that recognizes and removes damaged bases. Has a preference for oxidized purines, such as 7,8-dihydro-8-oxoguanine (8-oxoG). Has AP (apurinic/apyrimidinic) lyase activity and introduces nicks in the DNA strand. Cleaves the DNA backbone by beta-delta elimination to generate a single-strand break at the site of the removed base with both 3'- and 5'-phosphates. This chain is Formamidopyrimidine-DNA glycosylase, found in Prochlorococcus marinus (strain NATL1A).